Reading from the N-terminus, the 216-residue chain is N-glycosylase/DNA lyase (216 aa).

The 8-oxoguanine site is built by Gln-27, Ser-48, and Trp-59. The helix-hairpin-helix stretch occupies residues 106–170; sequence EHYYENMVAL…LDYRLKKINP (65 aa). Lys-130 functions as the Schiff-base intermediate with DNA in the catalytic mechanism. The 8-oxoguanine site is built by Phe-134 and Pro-160. Asp-162 is an active-site residue. 8-oxoguanine-binding residues include Asp-190 and Trp-194.

This sequence belongs to the archaeal N-glycosylase/DNA lyase (AGOG) family.

The enzyme catalyses 2'-deoxyribonucleotide-(2'-deoxyribose 5'-phosphate)-2'-deoxyribonucleotide-DNA = a 3'-end 2'-deoxyribonucleotide-(2,3-dehydro-2,3-deoxyribose 5'-phosphate)-DNA + a 5'-end 5'-phospho-2'-deoxyribonucleoside-DNA + H(+). In terms of biological role, DNA repair enzyme that is part of the base excision repair (BER) pathway; protects from oxidative damage by removing the major product of DNA oxidation, 8-oxoguanine (GO), from single- and double-stranded DNA substrates. This is N-glycosylase/DNA lyase from Nanoarchaeum equitans (strain Kin4-M).